Consider the following 100-residue polypeptide: NADH-quinone oxidoreductase subunit K (100 aa).

The next 3 helical transmembrane spans lie at Ile-2–Val-22, Leu-29–Ile-49, and Phe-63–Leu-83.

This sequence belongs to the complex I subunit 4L family. In terms of assembly, NDH-1 is composed of 14 different subunits. Subunits NuoA, H, J, K, L, M, N constitute the membrane sector of the complex.

Its subcellular location is the cell inner membrane. It carries out the reaction a quinone + NADH + 5 H(+)(in) = a quinol + NAD(+) + 4 H(+)(out). Functionally, NDH-1 shuttles electrons from NADH, via FMN and iron-sulfur (Fe-S) centers, to quinones in the respiratory chain. The immediate electron acceptor for the enzyme in this species is believed to be ubiquinone. Couples the redox reaction to proton translocation (for every two electrons transferred, four hydrogen ions are translocated across the cytoplasmic membrane), and thus conserves the redox energy in a proton gradient. The sequence is that of NADH-quinone oxidoreductase subunit K from Sulfurovum sp. (strain NBC37-1).